Here is a 115-residue protein sequence, read N- to C-terminus: Large ribosomal subunit protein bL20 (115 aa).

It belongs to the bacterial ribosomal protein bL20 family.

In terms of biological role, binds directly to 23S ribosomal RNA and is necessary for the in vitro assembly process of the 50S ribosomal subunit. It is not involved in the protein synthesizing functions of that subunit. The chain is Large ribosomal subunit protein bL20 from Borrelia turicatae (strain 91E135).